The chain runs to 374 residues: Cell division protein DivIB (374 aa).

The tract at residues 1 to 90 (MWKISNENDI…EEEHFADRLP (90 aa)) is disordered. Residues 1–103 (MWKISNENDI…KTRNKRLYRR (103 aa)) are Cytoplasmic-facing. Residues 39-53 (YLKKQAEEAASKGEN) show a composition bias toward basic and acidic residues. Residues 56-75 (AEVTITLQEQSQEEPQQHLP) show a composition bias toward polar residues. Residues 104 to 124 (LAFILTCLGTAILVALYFVSP) form a helical membrane-spanning segment. Residues 125-374 (LSRLSEVTVS…GENQEVQQAE (250 aa)) lie on the Extracellular side of the membrane. The 72-residue stretch at 126 to 197 (SRLSEVTVSG…NSFKIDIQEY (72 aa)) folds into the POTRA domain. Residues 325–374 (KESEETGSEVSEDSAVENQEVVDPNAGVATDGANNGTPTNGENQEVQQAE) are disordered. Over residues 326–339 (ESEETGSEVSEDSA) the composition is skewed to acidic residues. The span at 356-374 (GANNGTPTNGENQEVQQAE) shows a compositional bias: polar residues.

It belongs to the FtsQ/DivIB family. DivIB subfamily.

It localises to the cell membrane. Cell division protein that may be involved in stabilizing or promoting the assembly of the division complex. The protein is Cell division protein DivIB of Enterococcus faecalis (strain 62).